Consider the following 661-residue polypeptide: Kyphoscoliosis peptidase (661 aa).

The tract at residues G116–W137 is disordered. Active-site residues include C225, H267, and D282.

This sequence belongs to the transglutaminase-like superfamily. In terms of assembly, interacts with IGFN1 and FLNC. As to expression, specifically expressed in skeletal and cardiac muscle.

Its subcellular location is the cytoplasm. It localises to the cytoskeleton. The protein localises to the myofibril. It is found in the sarcomere. The protein resides in the z line. In terms of biological role, probable cytoskeleton-associated protease required for normal muscle growth. Involved in function, maturation and stabilization of the neuromuscular junction. May act by cleaving muscle-specific proteins such as FLNC. In Mus musculus (Mouse), this protein is Kyphoscoliosis peptidase.